We begin with the raw amino-acid sequence, 539 residues long: GMP synthase [glutamine-hydrolyzing] (539 aa).

The 196-residue stretch at 20–215 (TILILDFGSQ…AIEICHAKPN (196 aa)) folds into the Glutamine amidotransferase type-1 domain. C96 (nucleophile) is an active-site residue. Catalysis depends on residues H189 and E191. The GMPS ATP-PPase domain maps to 216 to 413 (WSMENFVDKE…LGIEHSLVWR (198 aa)). 244-250 (SGGVDST) lines the ATP pocket. XMP contacts are provided by R317, D475, K531, and E537.

As to quaternary structure, homodimer. Requires Mg(2+) as cofactor.

Its subcellular location is the cytoplasm. It localises to the cytosol. It catalyses the reaction XMP + L-glutamine + ATP + H2O = GMP + L-glutamate + AMP + diphosphate + 2 H(+). It functions in the pathway purine metabolism; GMP biosynthesis; GMP from XMP (L-Gln route): step 1/1. Catalyzes the conversion of xanthine monophosphate (XMP) to GMP in the presence of glutamine and ATP through an adenyl-XMP intermediate. This Schizosaccharomyces pombe (strain 972 / ATCC 24843) (Fission yeast) protein is GMP synthase [glutamine-hydrolyzing].